The sequence spans 318 residues: Pantothenate kinase (318 aa).

ATP is bound at residue 96–103 (GSVAVGKS).

It belongs to the prokaryotic pantothenate kinase family.

The protein resides in the cytoplasm. The catalysed reaction is (R)-pantothenate + ATP = (R)-4'-phosphopantothenate + ADP + H(+). It functions in the pathway cofactor biosynthesis; coenzyme A biosynthesis; CoA from (R)-pantothenate: step 1/5. In Afipia carboxidovorans (strain ATCC 49405 / DSM 1227 / KCTC 32145 / OM5) (Oligotropha carboxidovorans), this protein is Pantothenate kinase.